The primary structure comprises 94 residues: Adaptation to cold protein J (94 aa).

The region spanning 3 to 93 (NHFSVLGIKP…AMRELWDQFY (91 aa)) is the J domain. Residues 74–94 (NNVIVTDPNSAMRELWDQFYP) are essential for interaction with AtcC.

Interacts via its C-terminal extension with AtcC. Does not interact with AtcA and AtcB.

Functionally, involved in cold adaptation. The J-domain is functional and can stimulate the ATPase activity of the DnaK chaperone. May work as a co-chaperone of the DnaK system to support cold resistance. The sequence is that of Adaptation to cold protein J from Shewanella oneidensis (strain ATCC 700550 / JCM 31522 / CIP 106686 / LMG 19005 / NCIMB 14063 / MR-1).